Reading from the N-terminus, the 370-residue chain is Cytochrome b (370 aa).

4 consecutive transmembrane segments (helical) span residues 25 to 45 (FGSMLLACLTLQLLTGFFLAV), 69 to 90 (WMMQNLHAIGASMFFICIYIHI), 105 to 125 (WLSGTTLLIMLMATAFFGYVL), and 170 to 190 (FFALHFILPFGIISLSSLHIL). Heme b-binding residues include His-75 and His-89. Residues His-174 and His-188 each coordinate heme b. Residue His-193 coordinates a ubiquinone. The next 4 helical transmembrane spans lie at 218–238 (YKDMLMLTIMTIMLLTIVSFF), 280–300 (LGGALALTMSIMMLLTLPFTH), 312–332 (LMQLTFWTFTATFLVISWTAT), and 339–358 (FTTISQVAALMYFLFFISNP).

It belongs to the cytochrome b family. As to quaternary structure, the cytochrome bc1 complex contains 3 respiratory subunits (MT-CYB, CYC1 and UQCRFS1), 2 core proteins (UQCRC1 and UQCRC2) and probably 6 low-molecular weight proteins. Heme b is required as a cofactor.

Its subcellular location is the mitochondrion inner membrane. Component of the ubiquinol-cytochrome c reductase complex (complex III or cytochrome b-c1 complex) that is part of the mitochondrial respiratory chain. The b-c1 complex mediates electron transfer from ubiquinol to cytochrome c. Contributes to the generation of a proton gradient across the mitochondrial membrane that is then used for ATP synthesis. The polypeptide is Cytochrome b (MT-CYB) (Chilabothrus strigilatus strigilatus (New Providence boa constrictor)).